A 281-amino-acid chain; its full sequence is Probable catechol O-methyltransferase 2 (281 aa).

Ile-78, Glu-100, Ser-108, Glu-127, Val-128, Ala-156, and Asp-183 together coordinate S-adenosyl-L-methionine. Residue Asp-183 coordinates Mg(2+). Lys-186 is a binding site for substrate. Residues Asp-211 and Asn-212 each coordinate Mg(2+). A substrate-binding site is contributed by Asn-212.

Belongs to the class I-like SAM-binding methyltransferase superfamily. Cation-dependent O-methyltransferase family. The cofactor is Mg(2+).

The protein resides in the vacuole. The catalysed reaction is a catechol + S-adenosyl-L-methionine = a guaiacol + S-adenosyl-L-homocysteine + H(+). This Schizosaccharomyces pombe (strain 972 / ATCC 24843) (Fission yeast) protein is Probable catechol O-methyltransferase 2.